Consider the following 217-residue polypeptide: UPF0711 protein C18orf21 homolog (217 aa).

Position 126 is a phosphoserine (Ser-126). A phosphothreonine mark is found at Thr-130 and Thr-139. The interval 131–190 is disordered; the sequence is AANKASPKTPKRTAPGSANLGQSTNGSKGKSPSLTIRTPTSGQSTPICSSRNGSKRKKHF. Polar residues predominate over residues 149–182; sequence NLGQSTNGSKGKSPSLTIRTPTSGQSTPICSSRN.

Belongs to the UPF0711 family.

The polypeptide is UPF0711 protein C18orf21 homolog (Mus musculus (Mouse)).